Reading from the N-terminus, the 417-residue chain is Gamma-glutamyl phosphate reductase (417 aa).

The protein belongs to the gamma-glutamyl phosphate reductase family.

The protein localises to the cytoplasm. The enzyme catalyses L-glutamate 5-semialdehyde + phosphate + NADP(+) = L-glutamyl 5-phosphate + NADPH + H(+). It functions in the pathway amino-acid biosynthesis; L-proline biosynthesis; L-glutamate 5-semialdehyde from L-glutamate: step 2/2. Its function is as follows. Catalyzes the NADPH-dependent reduction of L-glutamate 5-phosphate into L-glutamate 5-semialdehyde and phosphate. The product spontaneously undergoes cyclization to form 1-pyrroline-5-carboxylate. This chain is Gamma-glutamyl phosphate reductase, found in Haemophilus influenzae (strain ATCC 51907 / DSM 11121 / KW20 / Rd).